The primary structure comprises 198 residues: Peroxiredoxin-2 (198 aa).

Residue Ala-2 is modified to N-acetylalanine. The Thioredoxin domain occupies 6–164 (AHIGKPAPDF…ALRLVQAFQY (159 aa)). Catalysis depends on Cys-51, which acts as the Cysteine sulfenic acid (-SOH) intermediate. Ser-112 is modified (phosphoserine). Thr-182 bears the Phosphothreonine mark. Lys-196 bears the N6-acetyllysine mark.

This sequence belongs to the peroxiredoxin family. AhpC/Prx1 subfamily. Homodimer; disulfide-linked, upon oxidation. 5 homodimers assemble to form a ring-like decamer. Interacts with TIPIN. The enzyme can be inactivated by further oxidation of the cysteine sulfenic acid (C(P)-SOH) to sulphinic acid (C(P)-SO2H) instead of its condensation to a disulfide bond. It can be reactivated by forming a transient disulfide bond with sulfiredoxin SRXN1, which reduces the cysteine sulfinic acid in an ATP- and Mg-dependent manner. In terms of processing, acetylation increases resistance to transition to high molecular-mass complexes. Deacetylated by HDAC6 which decreases reducing activity.

Its subcellular location is the cytoplasm. It catalyses the reaction a hydroperoxide + [thioredoxin]-dithiol = an alcohol + [thioredoxin]-disulfide + H2O. In terms of biological role, thiol-specific peroxidase that catalyzes the reduction of hydrogen peroxide and organic hydroperoxides to water and alcohols, respectively. Plays a role in cell protection against oxidative stress by detoxifying peroxides and as sensor of hydrogen peroxide-mediated signaling events. Might participate in the signaling cascades of growth factors and tumor necrosis factor-alpha by regulating the intracellular concentrations of H(2)O(2). The polypeptide is Peroxiredoxin-2 (Prdx2) (Rattus norvegicus (Rat)).